Consider the following 131-residue polypeptide: MSWQTYVDDHLCCEIDGQHLTSAAILGHDGSVWTESPNFPKFKPEEIAGIVKDFEEPGHLAPTGLFLGGTKYMVIQGEPGVVIRGKKGTGGITIKKTGMALILGIYDEPMTPGQCNLVVERLGDYLIDQGY.

Belongs to the profilin family. Occurs in many kinds of cells as a complex with monomeric actin in a 1:1 ratio.

The protein localises to the cytoplasm. It localises to the cytoskeleton. In terms of biological role, binds to actin and affects the structure of the cytoskeleton. At high concentrations, profilin prevents the polymerization of actin, whereas it enhances it at low concentrations. By binding to PIP2, it inhibits the formation of IP3 and DG. This Triticum aestivum (Wheat) protein is Profilin-1 (PRO1).